Consider the following 139-residue polypeptide: Aspartate 1-decarboxylase (139 aa).

Catalysis depends on serine 25, which acts as the Schiff-base intermediate with substrate; via pyruvic acid. The residue at position 25 (serine 25) is a Pyruvic acid (Ser). Residue threonine 57 coordinates substrate. Catalysis depends on tyrosine 58, which acts as the Proton donor. Residue 73–75 participates in substrate binding; it reads GAA. A disordered region spans residues 116–139; that stretch reads ELGEDPAHAPAGSGLKDPRHPEGE.

Belongs to the PanD family. As to quaternary structure, heterooctamer of four alpha and four beta subunits. It depends on pyruvate as a cofactor. Is synthesized initially as an inactive proenzyme, which is activated by self-cleavage at a specific serine bond to produce a beta-subunit with a hydroxyl group at its C-terminus and an alpha-subunit with a pyruvoyl group at its N-terminus.

Its subcellular location is the cytoplasm. It carries out the reaction L-aspartate + H(+) = beta-alanine + CO2. Its pathway is cofactor biosynthesis; (R)-pantothenate biosynthesis; beta-alanine from L-aspartate: step 1/1. Catalyzes the pyruvoyl-dependent decarboxylation of aspartate to produce beta-alanine. This Corynebacterium urealyticum (strain ATCC 43042 / DSM 7109) protein is Aspartate 1-decarboxylase.